The primary structure comprises 325 residues: Elongation factor P--(R)-beta-lysine ligase (325 aa).

76–78 is a binding site for substrate; sequence SPE. ATP-binding positions include 100 to 102 and Asn-109; that span reads RNE. Tyr-118 lines the substrate pocket. 244 to 245 is an ATP binding site; sequence EL. Position 251 (Glu-251) interacts with substrate. Gly-300 is an ATP binding site.

This sequence belongs to the class-II aminoacyl-tRNA synthetase family. EpmA subfamily. As to quaternary structure, homodimer.

The enzyme catalyses D-beta-lysine + L-lysyl-[protein] + ATP = N(6)-((3R)-3,6-diaminohexanoyl)-L-lysyl-[protein] + AMP + diphosphate + H(+). Its function is as follows. With EpmB is involved in the beta-lysylation step of the post-translational modification of translation elongation factor P (EF-P) on 'Lys-34'. Catalyzes the ATP-dependent activation of (R)-beta-lysine produced by EpmB, forming a lysyl-adenylate, from which the beta-lysyl moiety is then transferred to the epsilon-amino group of EF-P 'Lys-34'. This chain is Elongation factor P--(R)-beta-lysine ligase, found in Salmonella gallinarum (strain 287/91 / NCTC 13346).